The primary structure comprises 594 residues: Alanine--tRNA ligase (594 aa).

Residues histidine 456, histidine 460, cysteine 558, and histidine 562 each contribute to the Zn(2+) site.

The protein belongs to the class-II aminoacyl-tRNA synthetase family. Requires Zn(2+) as cofactor.

Its subcellular location is the cytoplasm. The catalysed reaction is tRNA(Ala) + L-alanine + ATP = L-alanyl-tRNA(Ala) + AMP + diphosphate. Catalyzes the attachment of alanine to tRNA(Ala) in a two-step reaction: alanine is first activated by ATP to form Ala-AMP and then transferred to the acceptor end of tRNA(Ala). Also edits incorrectly charged Ser-tRNA(Ala) and Gly-tRNA(Ala) via its editing domain. The chain is Alanine--tRNA ligase (alaS) from Borrelia garinii subsp. bavariensis (strain ATCC BAA-2496 / DSM 23469 / PBi) (Borreliella bavariensis).